Consider the following 342-residue polypeptide: Tetraacyldisaccharide 4'-kinase (342 aa).

Residue 68 to 75 (TVGGTGKT) participates in ATP binding.

Belongs to the LpxK family.

The enzyme catalyses a lipid A disaccharide + ATP = a lipid IVA + ADP + H(+). Its pathway is glycolipid biosynthesis; lipid IV(A) biosynthesis; lipid IV(A) from (3R)-3-hydroxytetradecanoyl-[acyl-carrier-protein] and UDP-N-acetyl-alpha-D-glucosamine: step 6/6. In terms of biological role, transfers the gamma-phosphate of ATP to the 4'-position of a tetraacyldisaccharide 1-phosphate intermediate (termed DS-1-P) to form tetraacyldisaccharide 1,4'-bis-phosphate (lipid IVA). The protein is Tetraacyldisaccharide 4'-kinase of Burkholderia thailandensis (strain ATCC 700388 / DSM 13276 / CCUG 48851 / CIP 106301 / E264).